The chain runs to 122 residues: Small ribosomal subunit protein uS13 (122 aa).

The segment at 98–122 is disordered; sequence VRGQRTHTNARTRKGPAKAIAGKKK.

The protein belongs to the universal ribosomal protein uS13 family. In terms of assembly, part of the 30S ribosomal subunit. Forms a loose heterodimer with protein S19. Forms two bridges to the 50S subunit in the 70S ribosome.

In terms of biological role, located at the top of the head of the 30S subunit, it contacts several helices of the 16S rRNA. In the 70S ribosome it contacts the 23S rRNA (bridge B1a) and protein L5 of the 50S subunit (bridge B1b), connecting the 2 subunits; these bridges are implicated in subunit movement. Contacts the tRNAs in the A and P-sites. This Roseobacter denitrificans (strain ATCC 33942 / OCh 114) (Erythrobacter sp. (strain OCh 114)) protein is Small ribosomal subunit protein uS13.